A 299-amino-acid polypeptide reads, in one-letter code: MTDNTRLRIAMQKSGRLSDDSRELLARCGIKINLHTQRLIAMAENMPIDILRVRDDDIPCLVMDGVVDLGIIGENVLEEELLNRRAQGEDPRYFTLRRLDFGGCRLSLATPVDEAWDGPLSLNGKRIATSYPHLLKRYLDQKGISFKSCLLNGSVEVAPRAGLADAICDLVSTGATLEANGLREVEVIYRSKACLIQRDGEMEESKQQLIDKLLTRIQGVIQARESKYIMMHAPTERLDEVIALLPGAERPTILPLAGDQQRVAMHMVSSETLFWETMEKLKALGASSILVLPIEKMME.

The protein belongs to the ATP phosphoribosyltransferase family. Long subfamily. In terms of assembly, equilibrium between an active dimeric form, an inactive hexameric form and higher aggregates. Interconversion between the various forms is largely reversible and is influenced by the natural substrates and inhibitors of the enzyme. Mg(2+) is required as a cofactor.

Its subcellular location is the cytoplasm. The catalysed reaction is 1-(5-phospho-beta-D-ribosyl)-ATP + diphosphate = 5-phospho-alpha-D-ribose 1-diphosphate + ATP. It participates in amino-acid biosynthesis; L-histidine biosynthesis; L-histidine from 5-phospho-alpha-D-ribose 1-diphosphate: step 1/9. Its activity is regulated as follows. Feedback inhibited by histidine. Functionally, catalyzes the condensation of ATP and 5-phosphoribose 1-diphosphate to form N'-(5'-phosphoribosyl)-ATP (PR-ATP). Has a crucial role in the pathway because the rate of histidine biosynthesis seems to be controlled primarily by regulation of HisG enzymatic activity. The sequence is that of ATP phosphoribosyltransferase from Shigella flexneri serotype 5b (strain 8401).